Reading from the N-terminus, the 432-residue chain is Repulsive guidance molecule A (432 aa).

The first 29 residues, 1 to 29 (MGRGAGSTALGLFQILPVFLCIFPPVTSP), serve as a signal peptide directing secretion. A propeptide spans 30–149 (CKILKCNSEF…NYTHCGLFGD (120 aa)) (removed in mature form). N-linked (GlcNAc...) asparagine glycosylation occurs at N96. Residues 99–122 (KDGPTSQPRLRTLPPGDSQERSDS) are disordered. 2 cysteine pairs are disulfide-bonded: C126–C207 and C144–C296. N140 carries an N-linked (GlcNAc...) asparagine glycan. N404 carries GPI-anchor amidated asparagine lipidation. Positions 405-432 (AAPSEHPWALPALWVALLSLSQCWLGLL) are cleaved as a propeptide — removed in mature form.

It belongs to the repulsive guidance molecule (RGM) family. Post-translationally, autocatalytically cleaved at low pH; the two chains remain linked via two disulfide bonds.

Its subcellular location is the cell membrane. Functionally, acts as an axon-specific repulsive guidance molecule in the retinotectal system. Repulsive for a subset of axons of the temporal half of the retina. Provides thus positional information for the temporal axons invading the optic tectum in the stratum opticum. The chain is Repulsive guidance molecule A (RGMA) from Gallus gallus (Chicken).